Consider the following 88-residue polypeptide: Small cysteine and glycine repeat-containing protein 1 (88 aa).

The segment at 4 to 72 (CGCGGCGGCG…TCSSCGYSCG (69 aa)) is 10 X 2 AA repeats of CG.

Belongs to the KRTAP type 28 family.

Its function is as follows. In the hair cortex, hair keratin intermediate filaments are embedded in an interfilamentous matrix, consisting of hair keratin-associated proteins (KRTAP), which are essential for the formation of a rigid and resistant hair shaft through their extensive disulfide bond cross-linking with abundant cysteine residues of hair keratins. The matrix proteins include the high-sulfur and high-glycine-tyrosine keratins. In Homo sapiens (Human), this protein is Small cysteine and glycine repeat-containing protein 1.